Here is a 143-residue protein sequence, read N- to C-terminus: Hemoglobin subunit alpha-2 (143 aa).

Ser2 is subject to N-acetylserine. A Globin domain is found at 2 to 143 (SLSSKQKATV…LALALAEKYR (142 aa)). O2 is bound at residue His60. Residue His89 participates in heme b binding.

This sequence belongs to the globin family. Hb 2 is a heterotetramer of two alpha-2 and two beta-2 chains. As to expression, red blood cells.

Its function is as follows. Involved in oxygen transport from gills to the various peripheral tissues. The chain is Hemoglobin subunit alpha-2 (hba2) from Gadus morhua (Atlantic cod).